A 265-amino-acid chain; its full sequence is Mlc titration factor A (265 aa).

The Zn(2+) site is built by His-111, His-148, His-152, and Glu-211.

This sequence belongs to the MtfA family. Interacts with Mlc. Requires Zn(2+) as cofactor.

It localises to the cytoplasm. Functionally, involved in the modulation of the activity of the glucose-phosphotransferase system (glucose-PTS). Interacts with the transcriptional repressor Mlc, preventing its interaction with DNA and leading to the modulation of expression of genes regulated by Mlc, including ptsG, which encodes the PTS system glucose-specific EIICB component. In terms of biological role, shows zinc-dependent metallopeptidase activity. This is Mlc titration factor A from Escherichia coli (strain 55989 / EAEC).